The primary structure comprises 99 residues: Putative pterin-4-alpha-carbinolamine dehydratase (99 aa).

Belongs to the pterin-4-alpha-carbinolamine dehydratase family.

The enzyme catalyses (4aS,6R)-4a-hydroxy-L-erythro-5,6,7,8-tetrahydrobiopterin = (6R)-L-erythro-6,7-dihydrobiopterin + H2O. The sequence is that of Putative pterin-4-alpha-carbinolamine dehydratase from Synechococcus sp. (strain CC9311).